The following is a 278-amino-acid chain: 2-dehydro-3-deoxyphosphooctonate aldolase (278 aa).

Belongs to the KdsA family.

The protein resides in the cytoplasm. It carries out the reaction D-arabinose 5-phosphate + phosphoenolpyruvate + H2O = 3-deoxy-alpha-D-manno-2-octulosonate-8-phosphate + phosphate. It functions in the pathway carbohydrate biosynthesis; 3-deoxy-D-manno-octulosonate biosynthesis; 3-deoxy-D-manno-octulosonate from D-ribulose 5-phosphate: step 2/3. Its pathway is bacterial outer membrane biogenesis; lipopolysaccharide biosynthesis. The chain is 2-dehydro-3-deoxyphosphooctonate aldolase from Fusobacterium nucleatum subsp. nucleatum (strain ATCC 25586 / DSM 15643 / BCRC 10681 / CIP 101130 / JCM 8532 / KCTC 2640 / LMG 13131 / VPI 4355).